The sequence spans 220 residues: Putative threonylcarbamoyl-AMP synthase (220 aa).

The region spanning 17–202 is the YrdC-like domain; that stretch reads ARGIASAVAA…TPRILRAGPV (186 aa).

It belongs to the SUA5 family.

Its subcellular location is the cytoplasm. The enzyme catalyses L-threonine + hydrogencarbonate + ATP = L-threonylcarbamoyladenylate + diphosphate + H2O. Required for the formation of a threonylcarbamoyl group on adenosine at position 37 (t(6)A37) in tRNAs that read codons beginning with adenine. Catalyzes the conversion of L-threonine, HCO(3)(-)/CO(2) and ATP to give threonylcarbamoyl-AMP (TC-AMP) as the acyladenylate intermediate, with the release of diphosphate. The polypeptide is Putative threonylcarbamoyl-AMP synthase (Mycobacterium leprae (strain TN)).